The primary structure comprises 834 residues: MKKNKLTTLALILPITILTPIVIASCTNKTKVKKSSSLDKIASNLKLEYFNNKANTKASSVQKDEIKKPLNLPNDVVFSVKDVFVSHKDQSVLIVKYTLKKGNEIQEYTYEIKGFKSVYEKDKIVNDLSQANEDFKKIVNNIRLKDTFDFKLAAFPNQNYDQLLPSQIYKNYYQGIEIQQHKYQNELDIKIINFLYPDGDFGSANKNGTLKLSLMLTDKKNNQVYYKLLEVSGFKSNPYGVDENGTIPGIGTERLKPKNQDDYFSKTQLQRYEIDNEGYLQILKRQNNDKNWKELRPDLNATVSDIKHFDEKAKNVGQDSYESAAYKGFTLPVYESDGKISGLALAGKDTPKGPSWVDAIGRNQWQIGGLPRTLPNEKYRQEAMQTFSLGILNNDSHKNNTYNKTAGTTWILDYQKTSDNKYPTKWYFATNLHVADAINENTLSINLMRLMDSAQIKTTFRLSNLDENIYNFGFRSKEHGKNLLNHGLKKIFDGRDFLKTKPAEYLINSQKEKYKDVGNFTDFAVFELDFEKLELVNVWKNFLGENNGLVTKYNNYNPQELAKVITSNYANNKNNQIKFLSKSYLSDYSKIDVPLKYRQEDAKTWFKKYDELFALGWPNSTEDFFFKAYVDDDQLKYRTRDNFSLWTNSDYRFFNNLTQQEGGQPAFPPERTERGNYLSYAIGFRSFIQKPGIVDAFIAVPQIGNNLYTSSDNKKYINMGLEYLPKHFAPAGGASGTSVRNQKNELVAIYHAKYDSSKTGLAAAFRSEGYDYQGLYGNYNLPQYDLIYGGGKDQTEKKSYREAMKDIYQNNNIKTALFPDGFDKIPDEFKFNNN.

A signal peptide spans 1–25 (MKKNKLTTLALILPITILTPIVIAS). Residue Cys-26 is the site of N-palmitoyl cysteine attachment. Cys-26 carries S-diacylglycerol cysteine lipidation. Residues 143–237 (RLKDTFDFKL…LLEVSGFKSN (95 aa)) form the Lipoprotein-associated type-17 domain.

The protein resides in the cell membrane. This Ureaplasma parvum serovar 3 (strain ATCC 700970) protein is Membrane-associated lipoprotein.